Consider the following 149-residue polypeptide: Large ribosomal subunit protein bL9 (149 aa).

This sequence belongs to the bacterial ribosomal protein bL9 family.

Functionally, binds to the 23S rRNA. This chain is Large ribosomal subunit protein bL9, found in Tolumonas auensis (strain DSM 9187 / NBRC 110442 / TA 4).